Reading from the N-terminus, the 274-residue chain is TIP41-like protein (274 aa).

Belongs to the TIP41 family.

This Dictyostelium discoideum (Social amoeba) protein is TIP41-like protein (tiprl).